Here is a 360-residue protein sequence, read N- to C-terminus: Aminomethyltransferase (360 aa).

Belongs to the GcvT family. The glycine cleavage system is composed of four proteins: P, T, L and H.

It carries out the reaction N(6)-[(R)-S(8)-aminomethyldihydrolipoyl]-L-lysyl-[protein] + (6S)-5,6,7,8-tetrahydrofolate = N(6)-[(R)-dihydrolipoyl]-L-lysyl-[protein] + (6R)-5,10-methylene-5,6,7,8-tetrahydrofolate + NH4(+). The glycine cleavage system catalyzes the degradation of glycine. The polypeptide is Aminomethyltransferase (Legionella pneumophila (strain Corby)).